The following is a 374-amino-acid chain: Heme A synthase (374 aa).

8 consecutive transmembrane segments (helical) span residues 22–42, 107–127, 135–155, 172–192, 209–229, 265–285, 306–326, and 327–347; these read VAVW…IGAI, LWGR…WVRG, PTLA…WFMV, LHLG…LGLL, AWAA…VAGI, AAVQ…VLSL, AAAT…VVWI, and PLAT…VWTL. His271 is a binding site for heme. Position 332 (His332) interacts with heme.

This sequence belongs to the COX15/CtaA family. Type 2 subfamily. In terms of assembly, interacts with CtaB. Heme b serves as cofactor.

It is found in the cell membrane. It catalyses the reaction Fe(II)-heme o + 2 A + H2O = Fe(II)-heme a + 2 AH2. It participates in porphyrin-containing compound metabolism; heme A biosynthesis; heme A from heme O: step 1/1. In terms of biological role, catalyzes the conversion of heme O to heme A by two successive hydroxylations of the methyl group at C8. The first hydroxylation forms heme I, the second hydroxylation results in an unstable dihydroxymethyl group, which spontaneously dehydrates, resulting in the formyl group of heme A. In Rhodospirillum centenum (strain ATCC 51521 / SW), this protein is Heme A synthase.